Consider the following 350-residue polypeptide: Nicotinate-nucleotide--dimethylbenzimidazole phosphoribosyltransferase (350 aa).

Catalysis depends on E316, which acts as the Proton acceptor.

This sequence belongs to the CobT family.

The enzyme catalyses 5,6-dimethylbenzimidazole + nicotinate beta-D-ribonucleotide = alpha-ribazole 5'-phosphate + nicotinate + H(+). The protein operates within nucleoside biosynthesis; alpha-ribazole biosynthesis; alpha-ribazole from 5,6-dimethylbenzimidazole: step 1/2. In terms of biological role, catalyzes the synthesis of alpha-ribazole-5'-phosphate from nicotinate mononucleotide (NAMN) and 5,6-dimethylbenzimidazole (DMB). This chain is Nicotinate-nucleotide--dimethylbenzimidazole phosphoribosyltransferase, found in Pseudomonas syringae pv. syringae (strain B728a).